Consider the following 84-residue polypeptide: Small ribosomal subunit protein uS15 (84 aa).

This sequence belongs to the universal ribosomal protein uS15 family. In terms of assembly, part of the 30S ribosomal subunit. Forms a bridge to the 50S subunit in the 70S ribosome, contacting the 23S rRNA.

Its function is as follows. One of the primary rRNA binding proteins, it binds directly to 16S rRNA where it helps nucleate assembly of the platform of the 30S subunit by binding and bridging several RNA helices of the 16S rRNA. Functionally, forms an intersubunit bridge (bridge B4) with the 23S rRNA of the 50S subunit in the ribosome. The polypeptide is Small ribosomal subunit protein uS15 (Thermosipho africanus (strain TCF52B)).